The primary structure comprises 172 residues: Large ribosomal subunit protein uL10 (172 aa).

Belongs to the universal ribosomal protein uL10 family. As to quaternary structure, part of the ribosomal stalk of the 50S ribosomal subunit. The N-terminus interacts with L11 and the large rRNA to form the base of the stalk. The C-terminus forms an elongated spine to which L12 dimers bind in a sequential fashion forming a multimeric L10(L12)X complex.

Functionally, forms part of the ribosomal stalk, playing a central role in the interaction of the ribosome with GTP-bound translation factors. This is Large ribosomal subunit protein uL10 from Chlamydia trachomatis serovar L2 (strain ATCC VR-902B / DSM 19102 / 434/Bu).